The primary structure comprises 58 residues: uncharacterized protein (58 aa).

It localises to the plastid. Its subcellular location is the chloroplast. This is an uncharacterized protein from Pyropia yezoensis (Susabi-nori).